A 385-amino-acid polypeptide reads, in one-letter code: Isocitrate dehydrogenase [NAD] subunit beta, mitochondrial (385 aa).

A mitochondrion-targeting transit peptide spans 1–34 (MAALSGVRWLTRALVSAGNPGAWRGLSTSAAAHA). K199 is subject to N6-acetyllysine.

Belongs to the isocitrate and isopropylmalate dehydrogenases family. In terms of assembly, heterooligomer of subunits alpha (IDH3A), beta (IDH3B), and gamma (IDH3G) in the apparent ratio of 2:1:1. The heterodimer containing one IDH3A and one IDH3B subunit and the heterodimer containing one IDH3A and one IDH3G subunit assemble into a heterotetramer (which contains two subunits of IDH3A, one of IDH3B and one of IDH3G) and further into the heterooctamer.

Its subcellular location is the mitochondrion. Its activity is regulated as follows. The heterotetramer and the heterodimer composed of IDH3A and IDH3G subunits can be allosterically activated by citrate (CIT) or/and ADP, and the two activators can act independently or synergistically. The heterodimer composed of IDH3A and IDH3B subunits cannot be allosterically regulated and the allosteric regulation of the heterotetramer is through the IDH3G subunit and not the IDH3B subunit. The IDH3G subunit contains the allosteric site which consists of a CIT-binding site and an ADP-binding site, and the binding of CIT and ADP causes conformational changes at the allosteric site which are transmitted to the active site in the catalytic subunit (IDH3A) through a cascade of conformational changes at the heterodimer interface, leading to stabilization of the isocitrate-binding at the active site and thus activation of the enzyme. ATP can activate the heterotetramer and the heterodimer composed of IDH3A and IDH3G subunits at low concentrations but inhibits their activities at high concentrations, whereas ATP exhibits only inhibitory effect on the heterodimer composed of IDH3A and IDH3B subunits. Its function is as follows. Plays a structural role to facilitate the assembly and ensure the full activity of the enzyme catalyzing the decarboxylation of isocitrate (ICT) into alpha-ketoglutarate. The heterodimer composed of the alpha (IDH3A) and beta (IDH3B) subunits and the heterodimer composed of the alpha (IDH3A) and gamma (IDH3G) subunits, have considerable basal activity but the full activity of the heterotetramer (containing two subunits of IDH3A, one of IDH3B and one of IDH3G) requires the assembly and cooperative function of both heterodimers. This Homo sapiens (Human) protein is Isocitrate dehydrogenase [NAD] subunit beta, mitochondrial (IDH3B).